A 612-amino-acid chain; its full sequence is BTB/POZ domain-containing protein 9 (612 aa).

The BTB domain maps to 36-104; it reads GDVTFVVEKK…IYTGRATLTD (69 aa). In terms of domain architecture, BACK spans 142–240; that stretch reads VCMTFDVASL…SLTELLNVVR (99 aa). A disordered region spans residues 559–612; that stretch reads QQSNQKEDSSEEPGTGDPSTPNQQLDPHAPRAPSASSLPPSPGPNSRSPNQQNQ. Residues 589-612 show a composition bias toward low complexity; that stretch reads RAPSASSLPPSPGPNSRSPNQQNQ.

Expressed in the brain (at protein level).

In Mus musculus (Mouse), this protein is BTB/POZ domain-containing protein 9 (Btbd9).